Here is a 529-residue protein sequence, read N- to C-terminus: Corneodesmosin (529 aa).

The N-terminal stretch at 1 to 32 (MGSSRAPWMGRVGGHGMMALLLAGLLLPGTLA) is a signal peptide. Disordered stretches follow at residues 38-248 (FSDP…SVSG) and 383-492 (GSTG…SSAG). 6 stretches are compositionally biased toward low complexity: residues 58–83 (GKGDSSGFSSYSGSSSSGSSISSARS), 90–100 (GSSSGSSIAQG), 111–175 (GYSQ…NGSA), 189–231 (PSQP…SGGP), 392–408 (SPSSSRVPSSSSISSSS), and 426–441 (PGTGSFSSSSSSQSSG). The N-linked (GlcNAc...) asparagine glycan is linked to N172. Residues 449–467 (GSKSSSSGHPCMSVSSLTL) are compositionally biased toward polar residues.

It is found in the secreted. In terms of biological role, important for the epidermal barrier integrity. The chain is Corneodesmosin (CDSN) from Pan troglodytes (Chimpanzee).